A 435-amino-acid polypeptide reads, in one-letter code: tRNA-2-methylthio-N(6)-dimethylallyladenosine synthase (435 aa).

One can recognise an MTTase N-terminal domain in the interval 1–117; it reads MKYFIKTYGC…MPKLLEDVKV (117 aa). Positions 10, 46, 80, 156, 160, and 163 each coordinate [4Fe-4S] cluster. One can recognise a Radical SAM core domain in the interval 142 to 370; it reads RDNSYCAYVT…LEIQKAITSK (229 aa). Residues 373–433 enclose the TRAM domain; that stretch reads QRYKNTVQKV…FQSLDGVVQN (61 aa).

Belongs to the methylthiotransferase family. MiaB subfamily. As to quaternary structure, monomer. [4Fe-4S] cluster is required as a cofactor.

Its subcellular location is the cytoplasm. The catalysed reaction is N(6)-dimethylallyladenosine(37) in tRNA + (sulfur carrier)-SH + AH2 + 2 S-adenosyl-L-methionine = 2-methylsulfanyl-N(6)-dimethylallyladenosine(37) in tRNA + (sulfur carrier)-H + 5'-deoxyadenosine + L-methionine + A + S-adenosyl-L-homocysteine + 2 H(+). Its function is as follows. Catalyzes the methylthiolation of N6-(dimethylallyl)adenosine (i(6)A), leading to the formation of 2-methylthio-N6-(dimethylallyl)adenosine (ms(2)i(6)A) at position 37 in tRNAs that read codons beginning with uridine. The sequence is that of tRNA-2-methylthio-N(6)-dimethylallyladenosine synthase from Hydrogenobaculum sp. (strain Y04AAS1).